Reading from the N-terminus, the 709-residue chain is RxLR effector protein PITG_15110 (709 aa).

An N-terminal signal peptide occupies residues M1 to G18. A RxLR-dEER motif is present at residues R51–R66.

This sequence belongs to the RxLR effector family.

The protein resides in the secreted. It is found in the host cytoplasm. Its subcellular location is the host cytoskeleton. Its function is as follows. Effector that enhances P.infestans colonization of Nicotiana benthamiana leaves. In Phytophthora infestans (strain T30-4) (Potato late blight agent), this protein is RxLR effector protein PITG_15110.